The sequence spans 598 residues: EF-hand and coiled-coil domain-containing protein 1 (598 aa).

A disordered region spans residues methionine 1–arginine 22. An EF-hand domain is found at glycine 54 to arginine 89. Disordered regions lie at residues alanine 96 to glutamate 127, arginine 175 to glutamate 198, and tyrosine 326 to proline 411. Over residues arginine 175–proline 185 the composition is skewed to basic residues. Residues aspartate 196 to glutamate 303 adopt a coiled-coil conformation. Residues proline 343–aspartate 359 show a composition bias toward basic and acidic residues. A compositionally biased stretch (acidic residues) spans serine 394–tryptophan 404. The stretch at threonine 479 to serine 533 forms a coiled coil.

The chain is EF-hand and coiled-coil domain-containing protein 1 (EFCC1) from Homo sapiens (Human).